A 531-amino-acid chain; its full sequence is Cation transporter HKT1;3 (531 aa).

Topologically, residues 1–46 (MNHCLVVSHKKLQTFRTFAASKFSSFTKSAQKSIKYSFQFIYQNNP) are cytoplasmic. The next 2 membrane-spanning stretches (helical) occupy residues 47-67 (LFVH…SLKV) and 108-128 (LWVL…MLGI). The Cytoplasmic portion of the chain corresponds to 129-190 (HFMRAEFGTK…GGHVEPKTIK (62 aa)). The next 2 helical transmembrane spans lie at 191-211 (FLGF…SLLI) and 264-284 (ILLL…APCL). Topologically, residues 285–321 (RLMVWSLEKITGKKDCRYILEYPKAIGYKHLMSTRES) are cytoplasmic. Transmembrane regions (helical) follow at residues 322 to 342 (VYLT…FLSL) and 383 to 403 (SAIL…SFLP). The Cytoplasmic segment spans residues 404 to 421 (RHDGEDSKTEKINKRKGL). 2 helical membrane passes run 422 to 442 (LENW…LICI) and 494 to 514 (YGFA…VMLF). The Cytoplasmic portion of the chain corresponds to 515–530 (GRLKTFNMKGGRAWKL).

The protein belongs to the TrkH potassium transport family. HKT (TC 2.A.38.3) subfamily. Interacts with CNIH1. As to expression, weakly expressed. In roots, expressed in epidermis, exodermis, cortex, and sieve elements and companion cells of phloem. In mature leaves, expressed in large highly vacuolated cells of the adaxial epidermis, phloem and xylem.

It is found in the endoplasmic reticulum membrane. The protein localises to the golgi apparatus membrane. The catalysed reaction is Na(+)(in) = Na(+)(out). Functions as a highly-selective sodium transporter. Does not seem to function as sodium-potassium cotransporter. May be involved in turgor changes for rolling and unrolling of leaves in response to environmental variations. This is Cation transporter HKT1;3 from Oryza sativa subsp. japonica (Rice).